We begin with the raw amino-acid sequence, 321 residues long: Large ribosomal subunit protein uL3 (321 aa).

It belongs to the universal ribosomal protein uL3 family. Part of the 50S ribosomal subunit. Forms a cluster with proteins L14 and L24e.

One of the primary rRNA binding proteins, it binds directly near the 3'-end of the 23S rRNA, where it nucleates assembly of the 50S subunit. This Nanoarchaeum equitans (strain Kin4-M) protein is Large ribosomal subunit protein uL3.